Consider the following 125-residue polypeptide: Mitochondrial import inner membrane translocase subunit TIM16 (125 aa).

Positions glutamate 58–arginine 110 are J-like. Phosphoserine is present on serine 69.

The protein belongs to the TIM16/PAM16 family. Probable component of the PAM complex at least composed of a mitochondrial HSP70 protein, GRPEL1 or GRPEL2, TIMM44, TIMM16/PAM16 and TIMM14/DNAJC19. Interacts with DNAJC19. Directly interacts with DNAJC15; this interaction counteracts DNAJC15-dependent stimulation of HSPA9 ATPase activity. Associates with the TIM23 complex. As to expression, expressed in trabecular bone and cartilage and by differentiated chondrocytes localized in the hypertrophic zone and by osteoblasts at early developmental stages.

It is found in the mitochondrion inner membrane. Its function is as follows. Regulates ATP-dependent protein translocation into the mitochondrial matrix. Inhibits DNAJC19 stimulation of HSPA9/Mortalin ATPase activity. The chain is Mitochondrial import inner membrane translocase subunit TIM16 from Mus musculus (Mouse).